A 1142-amino-acid chain; its full sequence is Protein kinase C-like (1142 aa).

In terms of domain architecture, REM-1 1 spans 1–67 (MNDEDKVHDI…LRELQMRRLG (67 aa)). The segment at 70 to 139 (VDNMSLGASP…PPDSNVPRAR (70 aa)) is disordered. Positions 149 to 226 (KFDTPHLGPR…LKRYEELHID (78 aa)) constitute an REM-1 2 domain. Residues 231-349 (GPDDDSINLP…LRRKKIEAEM (119 aa)) enclose the C2 domain. The interval 357-403 (ADRVGSRAPPPQFPMGAQSPQFAAPPTSPGSQEQNTMIPPQAPPPSQ) is disordered. Residues 385 to 394 (PGSQEQNTMI) show a composition bias toward polar residues. 2 consecutive Phorbol-ester/DAG-type zinc fingers follow at residues 457-505 (GHKF…VTKC) and 525-576 (PHRF…PDFC). Disordered regions lie at residues 592-622 (TQKKTHKDKASSMSERTLRPGSKTSISSGSI) and 651-807 (SQTT…TDPG). The segment covering 613–622 (SKTSISSGSI) has biased composition (polar residues). Composition is skewed to low complexity over residues 663–677 (TSTSSTTASAAAAAA), 712–724 (SAQQQQGYGSPQQ), and 741–765 (PQARPQQQQQQQQQTPQQVSPMYQQ). A Protein kinase domain is found at 817-1076 (FNFLAVLGKG…AQEIMSQPFF (260 aa)). ATP-binding positions include 823–831 (LGKGNFGKV) and Lys846. The Proton acceptor role is filled by Asp942. In terms of domain architecture, AGC-kinase C-terminal spans 1077-1142 (RNINWDDIYH…RGFSYTADFE (66 aa)).

It belongs to the protein kinase superfamily. AGC Ser/Thr protein kinase family. PKC subfamily.

The enzyme catalyses L-seryl-[protein] + ATP = O-phospho-L-seryl-[protein] + ADP + H(+). The catalysed reaction is L-threonyl-[protein] + ATP = O-phospho-L-threonyl-[protein] + ADP + H(+). The sequence is that of Protein kinase C-like from Neurospora crassa (strain ATCC 24698 / 74-OR23-1A / CBS 708.71 / DSM 1257 / FGSC 987).